The sequence spans 263 residues: Endonuclease 8 (263 aa).

Pro-2 serves as the catalytic Schiff-base intermediate with DNA. Glu-3 serves as the catalytic Proton donor. The active-site Proton donor; for beta-elimination activity is Lys-53. DNA contacts are provided by Gln-70, Arg-125, and Asn-169. The segment at 229-263 (KVFHRDGELCERCGGIIEKTTLSSRPFYWCPGCQH) adopts an FPG-type zinc-finger fold. Arg-253 acts as the Proton donor; for delta-elimination activity in catalysis.

Belongs to the FPG family. Zn(2+) is required as a cofactor.

The catalysed reaction is 2'-deoxyribonucleotide-(2'-deoxyribose 5'-phosphate)-2'-deoxyribonucleotide-DNA = a 3'-end 2'-deoxyribonucleotide-(2,3-dehydro-2,3-deoxyribose 5'-phosphate)-DNA + a 5'-end 5'-phospho-2'-deoxyribonucleoside-DNA + H(+). Functionally, involved in base excision repair of DNA damaged by oxidation or by mutagenic agents. Acts as a DNA glycosylase that recognizes and removes damaged bases. Has a preference for oxidized pyrimidines, such as thymine glycol, 5,6-dihydrouracil and 5,6-dihydrothymine. Has AP (apurinic/apyrimidinic) lyase activity and introduces nicks in the DNA strand. Cleaves the DNA backbone by beta-delta elimination to generate a single-strand break at the site of the removed base with both 3'- and 5'-phosphates. The sequence is that of Endonuclease 8 from Shigella boydii serotype 4 (strain Sb227).